Reading from the N-terminus, the 387-residue chain is MSVIKMTDLDLAGKRVLVRADLNVPVKDGKVTSDARIVATLPTIKLALEKGAKLMITSHLGRPTEGEYNEEFSLLPVVNYLKDKLSCPVRLAKDYLDGVEVAAGELVVLENCRFNKGEKKNTEELAKKYAALCDVFVMDAFGTAHRAEGSTYGVAQFAPVACAGPLLAGELDALGKAMLKPERPMVAIVGGSKVSTKLTVLESLSKIADQLVVGGGIANTFIAAAGHNVGKSLCEHDLIDTAKKLAAETNIPVTTDVVVGKEFSESTPATIKSVSEVTDDDMIFDIGPDSAKALADIIMNAKTILWNGPVGVFEFDQFAKGTEIIAKAIAESPAFSIAGGGDTLAAIDKFGIADKVSYISTGGGAFLEFVEGKVLPAVAILEERAKA.

Residues 21-23 (DLN), R36, 59-62 (HLGR), R113, and R146 contribute to the substrate site. ATP contacts are provided by residues K197, E314, and 340–343 (GGDT).

Belongs to the phosphoglycerate kinase family. As to quaternary structure, monomer.

The protein resides in the cytoplasm. It carries out the reaction (2R)-3-phosphoglycerate + ATP = (2R)-3-phospho-glyceroyl phosphate + ADP. It participates in carbohydrate degradation; glycolysis; pyruvate from D-glyceraldehyde 3-phosphate: step 2/5. This chain is Phosphoglycerate kinase, found in Tolumonas auensis (strain DSM 9187 / NBRC 110442 / TA 4).